Here is a 506-residue protein sequence, read N- to C-terminus: Glycine--tRNA ligase (506 aa).

2 residues coordinate substrate: Arg99 and Glu189. ATP is bound by residues 221 to 223 (RNE), 231 to 236 (FRVREF), 305 to 306 (EL), and 364 to 367 (GVDR). 236–240 (FEQME) contacts substrate. 360-364 (EPSAG) provides a ligand contact to substrate.

This sequence belongs to the class-II aminoacyl-tRNA synthetase family. Homodimer.

The protein resides in the cytoplasm. It carries out the reaction tRNA(Gly) + glycine + ATP = glycyl-tRNA(Gly) + AMP + diphosphate. Catalyzes the attachment of glycine to tRNA(Gly). The polypeptide is Glycine--tRNA ligase (Thermus thermophilus (strain ATCC BAA-163 / DSM 7039 / HB27)).